A 449-amino-acid chain; its full sequence is Exodeoxyribonuclease 7 large subunit (449 aa).

It belongs to the XseA family. As to quaternary structure, heterooligomer composed of large and small subunits.

It localises to the cytoplasm. It catalyses the reaction Exonucleolytic cleavage in either 5'- to 3'- or 3'- to 5'-direction to yield nucleoside 5'-phosphates.. Bidirectionally degrades single-stranded DNA into large acid-insoluble oligonucleotides, which are then degraded further into small acid-soluble oligonucleotides. In Aliivibrio fischeri (strain ATCC 700601 / ES114) (Vibrio fischeri), this protein is Exodeoxyribonuclease 7 large subunit.